An 861-amino-acid polypeptide reads, in one-letter code: ToMV susceptible protein tm-2 (861 aa).

A coiled-coil region spans residues 63–83 (VKNLLKDIQELAGDVEDLLDD). One can recognise an NB-ARC domain in the interval 162–388 (DDFNMLQAKL…LESMGHKVQD (227 aa)). ATP is bound at residue 185–192 (GMPGLGKT). LRR repeat units follow at residues 225 to 248 (LDIA…NLRS), 305 to 327 (LHAL…IFNF), 388 to 411 (DGCA…CFLY), 449 to 472 (LAED…TYNG), 510 to 536 (VARL…KLEK), 585 to 608 (MTCL…IVKL), 609 to 631 (TRLE…VWES), 652 to 680 (ISSF…FFEP), 689 to 713 (LRKL…PVPK), 735 to 758 (YPKI…AFPP), 781 to 804 (LPKL…LSGE), and 810 to 835 (FPQL…DVSM).

The protein belongs to the disease resistance NB-LRR family. (Microbial infection) Fails to interact with the tobamovirus mouvement protein of tobacco mosaic virus (TMV).

It is found in the cell membrane. Functionally, potential inhibitor of viral mouvements which may confer resistance to some tobamoviruses but not to the tomato mosaic virus (ToMV) and tobacco mosaic virus (TMV). The sequence is that of ToMV susceptible protein tm-2 from Solanum lycopersicum (Tomato).